The chain runs to 181 residues: ATP synthase subunit delta (181 aa).

It belongs to the ATPase delta chain family. In terms of assembly, F-type ATPases have 2 components, F(1) - the catalytic core - and F(0) - the membrane proton channel. F(1) has five subunits: alpha(3), beta(3), gamma(1), delta(1), epsilon(1). F(0) has three main subunits: a(1), b(2) and c(10-14). The alpha and beta chains form an alternating ring which encloses part of the gamma chain. F(1) is attached to F(0) by a central stalk formed by the gamma and epsilon chains, while a peripheral stalk is formed by the delta and b chains.

It is found in the cell membrane. F(1)F(0) ATP synthase produces ATP from ADP in the presence of a proton or sodium gradient. F-type ATPases consist of two structural domains, F(1) containing the extramembraneous catalytic core and F(0) containing the membrane proton channel, linked together by a central stalk and a peripheral stalk. During catalysis, ATP synthesis in the catalytic domain of F(1) is coupled via a rotary mechanism of the central stalk subunits to proton translocation. Functionally, this protein is part of the stalk that links CF(0) to CF(1). It either transmits conformational changes from CF(0) to CF(1) or is implicated in proton conduction. In Mycoplasma mycoides subsp. mycoides SC (strain CCUG 32753 / NCTC 10114 / PG1), this protein is ATP synthase subunit delta.